The chain runs to 170 residues: Ribosome maturation factor RimP (170 aa).

It belongs to the RimP family.

The protein resides in the cytoplasm. Its function is as follows. Required for maturation of 30S ribosomal subunits. The polypeptide is Ribosome maturation factor RimP (Chlorobaculum parvum (strain DSM 263 / NCIMB 8327) (Chlorobium vibrioforme subsp. thiosulfatophilum)).